A 794-amino-acid chain; its full sequence is Putative neurotrophin receptor LTRK 1 (794 aa).

Positions 1–33 (MRGPRRFRLWTRANVLTVISILTSILSGAGCSP) are cleaved as a signal peptide. The Extracellular portion of the chain corresponds to 34 to 419 (LSQLPSDNPA…PTEDFGPQTQ (386 aa)). Positions 36–102 (QLPSDNPAHV…DQVPGDASRN (67 aa)) are disordered. N-linked (GlcNAc...) asparagine glycans are attached at residues Asn-64, Asn-102, and Asn-128. LRR repeat units follow at residues 181–202 (CLKHLTIENCGLNNIQGIAFKT) and 205–226 (SLETINLRHNHLTEFPQELLRT). Positions 237 to 280 (NALTCSCTNLWLRSVDVAADRSEMTCSTRDGVSKMKMTQFKCEP) constitute an LRRCT domain. N-linked (GlcNAc...) asparagine glycosylation is found at Asn-288 and Asn-374. Residues 420 to 440 (VILPVVGVVILLISAVFIIYL) form a helical membrane-spanning segment. The Cytoplasmic portion of the chain corresponds to 441–794 (CQRAKHRSHA…GDPVYIDIIA (354 aa)). The 272-residue stretch at 504 to 775 (ILLMRVIGEG…PQDRLTMKDI (272 aa)) folds into the Protein kinase domain. ATP contacts are provided by residues 510–518 (IGEGAFGRV) and Lys-538. Residue Asp-647 is the Proton acceptor of the active site. Tyr-673, Tyr-677, Tyr-678, and Tyr-789 each carry phosphotyrosine; by autocatalysis.

Belongs to the protein kinase superfamily. Tyr protein kinase family. Insulin receptor subfamily. As to expression, expression is confined to the central nervous system and its associated endocrine tissues.

It is found in the membrane. It carries out the reaction L-tyrosyl-[protein] + ATP = O-phospho-L-tyrosyl-[protein] + ADP + H(+). In terms of biological role, may bind an endogenous invertebrate neurotrophin. Binds human NT-3, but not NGF or BDNF. The polypeptide is Putative neurotrophin receptor LTRK 1 (Lymnaea stagnalis (Great pond snail)).